The primary structure comprises 281 residues: CDAN1-interacting nuclease 1 (281 aa).

It localises to the nucleus. The protein resides in the cytoplasm. Functionally, plays a role in erythroid cell differentiation. This Bos taurus (Bovine) protein is CDAN1-interacting nuclease 1 (CDIN1).